Reading from the N-terminus, the 148-residue chain is SUMO-conjugating enzyme UBC9 (148 aa).

The UBC core domain maps to Met1–Met147. The active-site Glycyl thioester intermediate is the Cys85.

The protein belongs to the ubiquitin-conjugating enzyme family. As to quaternary structure, interacts with CHIP. In terms of tissue distribution, highest expression in young stems and old leaves. Lowest levels in floral buds, anthers and young leaves.

It functions in the pathway protein modification; protein sumoylation. In terms of biological role, accepts the ubiquitin-like protein SUMO/SMT3 from the E1 complex and catalyzes its covalent attachment to other proteins. Mediates the selective degradation of short-lived and abnormal proteins. The polypeptide is SUMO-conjugating enzyme UBC9 (UBC9) (Arabidopsis thaliana (Mouse-ear cress)).